A 270-amino-acid polypeptide reads, in one-letter code: GTP cyclohydrolase FolE2 2 (270 aa).

It belongs to the GTP cyclohydrolase IV family.

It catalyses the reaction GTP + H2O = 7,8-dihydroneopterin 3'-triphosphate + formate + H(+). The protein operates within cofactor biosynthesis; 7,8-dihydroneopterin triphosphate biosynthesis; 7,8-dihydroneopterin triphosphate from GTP: step 1/1. In terms of biological role, converts GTP to 7,8-dihydroneopterin triphosphate. The protein is GTP cyclohydrolase FolE2 2 of Dechloromonas aromatica (strain RCB).